Here is a 126-residue protein sequence, read N- to C-terminus: UPF0538 protein C2orf76 homolog (126 aa).

This sequence belongs to the UPF0538 family.

The chain is UPF0538 protein C2orf76 homolog from Bos taurus (Bovine).